The chain runs to 295 residues: 33 kDa chaperonin (295 aa).

2 disulfides stabilise this stretch: Cys-236–Cys-238 and Cys-269–Cys-272.

This sequence belongs to the HSP33 family. In terms of processing, under oxidizing conditions two disulfide bonds are formed involving the reactive cysteines. Under reducing conditions zinc is bound to the reactive cysteines and the protein is inactive.

It localises to the cytoplasm. Redox regulated molecular chaperone. Protects both thermally unfolding and oxidatively damaged proteins from irreversible aggregation. Plays an important role in the bacterial defense system toward oxidative stress. This Geobacter sp. (strain M21) protein is 33 kDa chaperonin.